The chain runs to 493 residues: Transcript termination protein A18 (493 aa).

In terms of domain architecture, Helicase ATP-binding spans 100 to 256 (MIESKRPLYI…NSIINIAKLS (157 aa)). Residue 113-120 (LACGFGKT) coordinates ATP. The DESH box motif lies at 206 to 209 (DESH).

Belongs to the helicase family. Poxviruses subfamily. As to quaternary structure, interacts with G2. Might be part of a transcription complex composed at least of G2, A18, and H5.

Its subcellular location is the virion. Its function is as follows. DNA helicase which seems to act as a postreplicative transcription termination factor. Involved in ATP-dependent release of nascent RNA. Forms a stable complex with single-stranded DNA, and to a lesser extent RNA. This is Transcript termination protein A18 from Homo sapiens (Human).